The primary structure comprises 341 residues: Fructose-1,6-bisphosphatase, cytosolic (341 aa).

Mg(2+) is bound by residues Glu71, Glu100, Asp121, Leu123, and Asp124. Substrate is bound by residues 124-127, Asn215, Tyr247, Tyr267, and Lys277; that span reads DGSS. Position 283 (Glu283) interacts with Mg(2+).

This sequence belongs to the FBPase class 1 family. It depends on Mg(2+) as a cofactor.

The protein resides in the cytoplasm. Its subcellular location is the nucleus. The catalysed reaction is beta-D-fructose 1,6-bisphosphate + H2O = beta-D-fructose 6-phosphate + phosphate. Functionally, catalyzes the first irreversible reaction from fructose-1,6-bisphosphate to fructose-6-phosphate and inorganic phosphate and plays an important regulatory role in sucrose biosynthesis and metabolism. Its activity is essential to regulate starch levels. Functions in fructose-mediated signaling independently of its catalytic activity in sugar metabolism. May act downstream of ABA2/GIN1, which is involved in abscisic acid (ABA) synthesis to regulate autotrophic transition and modulate early seedling establishment after seed germination. The chain is Fructose-1,6-bisphosphatase, cytosolic from Arabidopsis thaliana (Mouse-ear cress).